Here is a 150-residue protein sequence, read N- to C-terminus: uncharacterized protein (150 aa).

Helical transmembrane passes span 12 to 30, 40 to 62, 74 to 96, and 106 to 128; these read IVQR…YFLF, RLLS…LVLF, IRRT…VLSG, and ALID…SRAV.

The protein localises to the cell membrane. This is an uncharacterized protein from Archaeoglobus fulgidus (strain ATCC 49558 / DSM 4304 / JCM 9628 / NBRC 100126 / VC-16).